A 261-amino-acid chain; its full sequence is Putative ankyrin repeat protein L99 (261 aa).

ANK repeat units lie at residues K21–A50, H51–S80, D81–A110, Q112–A140, N142–A170, D171–C203, and N231–S259.

The chain is Putative ankyrin repeat protein L99 from Acanthamoeba polyphaga (Amoeba).